A 962-amino-acid polypeptide reads, in one-letter code: pH-response regulator protein palF/prr-3 (962 aa).

Disordered regions lie at residues 1-43 (MGPF…DSST), 225-326 (APPK…THPS), 568-675 (TDSN…PDEN), and 689-962 (RLLP…RYER). A compositionally biased stretch (basic residues) spans 237 to 246 (ISKRAKKKRP). 3 stretches are compositionally biased toward polar residues: residues 297–307 (GFSQAPRSVSH), 314–326 (SGDS…THPS), and 581–596 (PSLT…SNYV). Low complexity-rich tracts occupy residues 696 to 722 (PIAA…PDSS) and 738 to 747 (PTPAATPATA). Basic and acidic residues predominate over residues 793 to 805 (TEDKQELERRRLL). The span at 830-839 (AGPSGSRAGP) shows a compositional bias: low complexity. The span at 840-849 (SAPPPAPPVA) shows a compositional bias: pro residues. A compositionally biased stretch (low complexity) spans 913–928 (PSSPVLAPASAFFPAS). Over residues 929 to 949 (GSGNVHDSPREQGQQARSDSS) the composition is skewed to polar residues.

The protein belongs to the arrestin family. PalF/RIM8 subfamily.

Functionally, required for the proteolytic cleavage of the transcription factor pacc-1 in response to alkaline ambient pH. The chain is pH-response regulator protein palF/prr-3 (prr-3) from Neurospora crassa (strain ATCC 24698 / 74-OR23-1A / CBS 708.71 / DSM 1257 / FGSC 987).